The chain runs to 304 residues: Hairy/enhancer-of-split related with YRPW motif protein 1 (304 aa).

The tract at residues 1-52 (MKRAHPEYSSSESELDETIEVEKESADENGNLSSALGSMSPTTSSQILARKR) is disordered. Positions 28–47 (ENGNLSSALGSMSPTTSSQI) are enriched in polar residues. A transcriptional repression and interaction with NCOR1 and SIN3A region spans residues 48–117 (LARKRRRGII…GGKGYFDAHA (70 aa)). Residues 49 to 104 (ARKRRRGIIEKRRRDRINNSLSELRRLVPSAFEKQGSAKLEKAEILQMTVDHLKML) form the bHLH domain. The 37-residue stretch at 122–158 (YRSLGFRECLAEVARYLSIIEGLDASDPLRVRLVSHL) folds into the Orange domain. The span at 197-211 (SQSTHGNTGTSASPT) shows a compositional bias: polar residues. Residues 197 to 234 (SQSTHGNTGTSASPTESHHQGRLATAHPEASALRAPPS) form a disordered region. Positions 294–297 (YRPW) match the YRPW motif motif.

The protein belongs to the HEY family. In terms of assembly, self-associates. Interacts with HES1 and HEYL. Interacts with HDAC1, NCOR1 and SIN3A. Interacts with GATA4 and GATA6. Interacts with CCDC89/BOIP.

The protein localises to the nucleus. In terms of biological role, transcriptional repressor which binds preferentially to the canonical E box sequence 5'-CACGTG-3'. Downstream effector of Notch signaling required for cardiovascular development. Specifically required for the Notch-induced endocardial epithelial to mesenchymal transition, which is itself criticial for cardiac valve and septum development. May be required in conjunction with HEY2 to specify arterial cell fate or identity. Promotes maintenance of neuronal precursor cells and glial versus neuronal fate specification. Represses transcription by the cardiac transcriptional activators GATA4 and GATA6 and by the neuronal bHLH factors ASCL1/MASH1 and NEUROD4/MATH3. The sequence is that of Hairy/enhancer-of-split related with YRPW motif protein 1 (HEY1) from Bos taurus (Bovine).